A 447-amino-acid chain; its full sequence is Cysteine--tRNA ligase (447 aa).

Cysteine 28 serves as a coordination point for Zn(2+). The short motif at 30-40 (PTVYNYIHIGN) is the 'HIGH' region element. Positions 211, 236, and 240 each coordinate Zn(2+). The 'KMSKS' region signature appears at 268–272 (KMSKS). Lysine 271 contributes to the ATP binding site.

The protein belongs to the class-I aminoacyl-tRNA synthetase family. In terms of assembly, monomer. The cofactor is Zn(2+).

It is found in the cytoplasm. The enzyme catalyses tRNA(Cys) + L-cysteine + ATP = L-cysteinyl-tRNA(Cys) + AMP + diphosphate. The chain is Cysteine--tRNA ligase from Streptococcus pyogenes serotype M18 (strain MGAS8232).